The sequence spans 287 residues: MAAITAALVKELRERTGEGMMDCKKALEKAGGDIEKAIDDMRASGAIKAAKKAGNVAAEGAIAVKTDGTSAVLLEVNSQTDFLALQDDFKNFVAESLEEAFAQKLTDAAPLIASREAAREALVAKCGENVNIRRLVRVEGDVVGAYLHGNKIGAVVVLKGGDVELAKNIAMHVAASNPEFLDSSEISAEAIEREKNVFLQLNADKIAGKPENIVENMINGRITKFKAEASLKEQAFVMNPEVKVGELAKKAGAEIVSFTYFKVGEGIEKPVDDFAAEVAAQVAAAKQ.

Residues 80–83 (TDFL) are involved in Mg(2+) ion dislocation from EF-Tu.

The protein belongs to the EF-Ts family.

It is found in the cytoplasm. In terms of biological role, associates with the EF-Tu.GDP complex and induces the exchange of GDP to GTP. It remains bound to the aminoacyl-tRNA.EF-Tu.GTP complex up to the GTP hydrolysis stage on the ribosome. The polypeptide is Elongation factor Ts (Pseudomonas putida (strain ATCC 700007 / DSM 6899 / JCM 31910 / BCRC 17059 / LMG 24140 / F1)).